The sequence spans 507 residues: Histidine ammonia-lyase (507 aa).

Residues 141 to 143 constitute a cross-link (5-imidazolinone (Ala-Gly)); sequence ASG. Position 142 is a 2,3-didehydroalanine (Ser) (serine 142).

Belongs to the PAL/histidase family. Post-translationally, contains an active site 4-methylidene-imidazol-5-one (MIO), which is formed autocatalytically by cyclization and dehydration of residues Ala-Ser-Gly.

The protein localises to the cytoplasm. It carries out the reaction L-histidine = trans-urocanate + NH4(+). It functions in the pathway amino-acid degradation; L-histidine degradation into L-glutamate; N-formimidoyl-L-glutamate from L-histidine: step 1/3. In Cereibacter sphaeroides (strain KD131 / KCTC 12085) (Rhodobacter sphaeroides), this protein is Histidine ammonia-lyase.